An 85-amino-acid chain; its full sequence is Putative regulatory protein THEYE_A0405 (85 aa).

This sequence belongs to the RemA family.

In Thermodesulfovibrio yellowstonii (strain ATCC 51303 / DSM 11347 / YP87), this protein is Putative regulatory protein THEYE_A0405.